We begin with the raw amino-acid sequence, 347 residues long: D-alanine--D-alanine ligase (347 aa).

Residues 133-342 (KQAFAQASLP…FPDLVHRLIQ (210 aa)) enclose the ATP-grasp domain. 169 to 224 (ETELGYPCFVKPANLGSSVGIAKVRDRAELEAALDQAAALDRRLIIEAAIDNPREV) is an ATP binding site. Mg(2+) contacts are provided by D296, E309, and N311.

This sequence belongs to the D-alanine--D-alanine ligase family. Mg(2+) serves as cofactor. Mn(2+) is required as a cofactor.

The protein resides in the cytoplasm. It catalyses the reaction 2 D-alanine + ATP = D-alanyl-D-alanine + ADP + phosphate + H(+). The protein operates within cell wall biogenesis; peptidoglycan biosynthesis. Its function is as follows. Cell wall formation. The polypeptide is D-alanine--D-alanine ligase (Synechococcus elongatus (strain ATCC 33912 / PCC 7942 / FACHB-805) (Anacystis nidulans R2)).